A 544-amino-acid polypeptide reads, in one-letter code: MKTKIVATIGPASSSPEIMKQMIDNGLSLVRINSAHADIKDVSKITQMVRSINRDVGIMIDLKGPELRTGEFAGGTLKISSGKDYVMGKDIVLNNMNVLSAVQVGDRILMSDGEVSFEVESTDPFTIRALNDGVLRDRSRVNIPGRFIELGTITDRDRAFIREGIADGVDFFALSFVQKSENVDSLRDFVIDSGGDQYIISKIETKSGLDNIEEIVKSSDGIMVARGDLGVELPLKEVVLAQKHIIKTAHEDGDFTIVATQVLESMVNNSSPTRAEISDITNAIIDNADALMLSEESAIGKYPVQAVRTLKEVSDYVEDKVSFDSSYYFKGNTIAYSVARAAKILSDDIKSDGIVALTHTGSTVRMISSLRPKAMVYAATVSESLARKLNIYFGVLPLHMEGNAEDLSFSEIMEYIVRSGRFADGSKLVMTSGDPYFTFGGTNDVKVAVVGKFIGRGYSFGDSLSGTATYGTKGDILMSEDGRIPGTDFRAFIFTSDIKPSLMSSLKGKTVVTKARLVRQIKEGERIYIDGNTGIILMASPDQK.

Arginine 31 is a binding site for substrate. K(+)-binding residues include asparagine 33 and aspartate 61. Position 33-36 (33-36 (NSAH)) interacts with ATP. Arginine 68 lines the ATP pocket. Glutamate 204 contributes to the Mg(2+) binding site. Substrate is bound by residues glycine 227, aspartate 228, and threonine 260. Aspartate 228 provides a ligand contact to Mg(2+).

Belongs to the pyruvate kinase family. As to quaternary structure, homotetramer. Mg(2+) serves as cofactor. Requires K(+) as cofactor.

The catalysed reaction is pyruvate + ATP = phosphoenolpyruvate + ADP + H(+). It functions in the pathway carbohydrate degradation; glycolysis; pyruvate from D-glyceraldehyde 3-phosphate: step 5/5. The chain is Pyruvate kinase from Thermoplasma acidophilum (strain ATCC 25905 / DSM 1728 / JCM 9062 / NBRC 15155 / AMRC-C165).